Reading from the N-terminus, the 395-residue chain is S-adenosylmethionine synthase (395 aa).

ATP is bound at residue H18. D20 is a Mg(2+) binding site. E46 is a binding site for K(+). L-methionine-binding residues include E59 and Q103. The tract at residues 103-113 (QSADIAVGVDS) is flexible loop. ATP is bound by residues 170–172 (DAK), D244, 250–251 (RK), A267, and K271. L-methionine is bound at residue D244. K275 contributes to the L-methionine binding site.

This sequence belongs to the AdoMet synthase family. In terms of assembly, homotetramer; dimer of dimers. The cofactor is Mg(2+). K(+) serves as cofactor.

The protein resides in the cytoplasm. The enzyme catalyses L-methionine + ATP + H2O = S-adenosyl-L-methionine + phosphate + diphosphate. It participates in amino-acid biosynthesis; S-adenosyl-L-methionine biosynthesis; S-adenosyl-L-methionine from L-methionine: step 1/1. Catalyzes the formation of S-adenosylmethionine (AdoMet) from methionine and ATP. The overall synthetic reaction is composed of two sequential steps, AdoMet formation and the subsequent tripolyphosphate hydrolysis which occurs prior to release of AdoMet from the enzyme. This chain is S-adenosylmethionine synthase, found in Gluconacetobacter diazotrophicus (strain ATCC 49037 / DSM 5601 / CCUG 37298 / CIP 103539 / LMG 7603 / PAl5).